Consider the following 351-residue polypeptide: Transmembrane protein 115 (351 aa).

Over 1–19 the chain is Cytoplasmic; that stretch reads MQRALPGARQHLGAILSSA. The mediates homooligomerization stretch occupies residues 1–205; the sequence is MQRALPGARQ…FGLISSWVYL (205 aa). A helical membrane pass occupies residues 20–40; that stretch reads SVVVKALCAAVLFLYLLSFAV. The Lumenal portion of the chain corresponds to 41–97; the sequence is DTGCLAVTPGYLFPPNFWIWTLATHGLMEQHVWDVAISLATVVVAGRLLEPLWGALE. The chain crosses the membrane as a helical span at residues 98–118; that stretch reads LLIFFSVVNVSVGLLGAFAYL. Over 119–126 the chain is Cytoplasmic; that stretch reads LTYMASFN. The helical transmembrane segment at 127-147 threads the bilayer; it reads LVYLFTVRIHGALGFLGGVLV. At 148–165 the chain is on the lumenal side; sequence ALKQTMGDCVVLRVPQVR. A helical membrane pass occupies residues 166-186; sequence VSVVPMLLLGLLLLLRLATLL. Topologically, residues 187-351 are cytoplasmic; it reads QSPALASYGF…ITFEAAPPTL (165 aa). The segment at 206 to 229 is mediates localization to the Golgi; sequence RFYQRHSRGRGDMADHFAFATFFP. The tract at residues 300–351 is disordered; that stretch reads DQSVWPSMDDDEEEAGAKVDSPMPSDKAPTLPGKGAVPESSLITFEAAPPTL. Residue T329 is modified to Phosphothreonine.

This sequence belongs to the TMEM115 family. Homooligomer. Interacts with COPB1. May interact with LMAN1. Interacts with the COG complex; probably through COG3.

The protein localises to the golgi apparatus. It localises to the golgi stack membrane. May play a role in retrograde transport of proteins from the Golgi to the endoplasmic reticulum. May indirectly play a role in protein glycosylation in the Golgi. In Bos taurus (Bovine), this protein is Transmembrane protein 115.